Here is a 1311-residue protein sequence, read N- to C-terminus: Zinc finger protein 521 (1311 aa).

A compositionally biased stretch (basic residues) spans 1–10 (MSRRKQAKPR). Positions 1 to 37 (MSRRKQAKPRSLKDPNCKLEDKTEDGEALDCKKRPED) are disordered. The span at 11–21 (SLKDPNCKLED) shows a compositional bias: basic and acidic residues. The C2H2-type 1; degenerate zinc finger occupies 47–67 (HSCDSCLQVFESLSDITEHKI). The disordered stretch occupies residues 81–108 (DPTCSWPASSPSSKDQTSPSHGEGCDFG). Low complexity predominate over residues 87-102 (PASSPSSKDQTSPSHG). 7 C2H2-type zinc fingers span residues 118–140 (YPCQ…EQSH), 146–168 (FKCT…IKLH), 174–196 (YHCS…LKTH), 202–224 (YKCA…MQVH), 246–269 (QKCS…AECH), 281–304 (LQCV…EQVH), and 310–332 (NSCS…MDSH). Residues 349–358 (VGYTSVSSTT) show a composition bias toward low complexity. The tract at residues 349–397 (VGYTSVSSTTPDSNLSVDSSTMVEAAPPIPKSRGRKRAAQQTPDMTGPS) is disordered. 2 stretches are compositionally biased toward polar residues: residues 359–370 (PDSNLSVDSSTM) and 387–397 (AQQTPDMTGPS). Residues 405-429 (YSCIYCNKQLFSSLAVLQIHLKTMH) form a C2H2-type 9; degenerate zinc finger. 3 consecutive C2H2-type zinc fingers follow at residues 437-460 (HICQ…KQVH), 477-500 (YQCN…RCSH), and 513-536 (FFCP…RQVH). Position 546 is a phosphoserine (serine 546). Residues 560 to 585 (YSCSYCTNSPIFNSVLKLNKHIKENH) form a C2H2-type 13; atypical zinc finger. A phosphoserine mark is found at serine 605 and serine 608. 7 consecutive C2H2-type zinc fingers follow at residues 634–656 (YICN…LKTH), 664–686 (LTCP…VTIH), 694–717 (YICE…LDMH), 722–745 (FRCT…AVKH), 752–775 (YRCT…KHNH), 783–805 (HKCI…ITTH), and 809–832 (YNCK…REKH). Residues 863-882 (TNSQESHNSHDGSEEDVDTS) form a disordered region. The C2H2-type 21; degenerate zinc finger occupies 886–908 (YGCDICGAAYTMETLLQNHQLRD). 3 consecutive C2H2-type zinc fingers follow at residues 930 to 952 (YKCN…MQTH), 959 to 981 (YMCP…KVTH), and 1020 to 1042 (FRCV…GTFH). The segment at 1065-1083 (YKCASCLKEFRSKQDLVKL) adopts a C2H2-type 25; degenerate zinc-finger fold. A C2H2-type 26 zinc finger spans residues 1138–1161 (TRCSSCNVKFESESELQNHIQTIH). Lysine 1146 participates in a covalent cross-link: Glycyl lysine isopeptide (Lys-Gly) (interchain with G-Cter in SUMO2). The span at 1168–1178 (SNSTQLKTPQV) shows a compositional bias: polar residues. The segment at 1168–1188 (SNSTQLKTPQVSPMPRISPSQ) is disordered. C2H2-type zinc fingers lie at residues 1195–1217 (YQCI…VANH), 1225–1247 (HECK…LIEH), 1256–1279 (FKCP…FSAH), and 1286–1309 (YDCT…MTQH).

This sequence belongs to the krueppel C2H2-type zinc-finger protein family. As to quaternary structure, interacts with EBF1. Interacts with SMAD1 and SMAD4. As to expression, predominantly expressed in hematopoietic cells. Present in organs and tissues that contain stem and progenitor cells, myeloid and/or lymphoid: placenta, spleen, lymph nodes, thymus, bone marrow and fetal liver. Within the hematopoietic system, it is abundant in CD34(+) cells but undetectable in mature peripheral blood leukocytes, and its levels rapidly decrease during the differentiation of CD34(+) cells in response to hemopoietins.

The protein localises to the nucleus. In terms of biological role, transcription factor that can both act as an activator or a repressor depending on the context. Involved in BMP signaling and in the regulation of the immature compartment of the hematopoietic system. Associates with SMADs in response to BMP2 leading to activate transcription of BMP target genes. Acts as a transcriptional repressor via its interaction with EBF1, a transcription factor involved specification of B-cell lineage; this interaction preventing EBF1 to bind DNA and activate target genes. The sequence is that of Zinc finger protein 521 (ZNF521) from Homo sapiens (Human).